Reading from the N-terminus, the 30-residue chain is Dermaseptin-3.1TR (30 aa).

As to expression, expressed by the skin glands.

It localises to the secreted. In terms of biological role, has antimicrobial activity. The chain is Dermaseptin-3.1TR from Phyllomedusa trinitatis (Trinidad leaf frog).